Reading from the N-terminus, the 512-residue chain is MKKTTLLVILDGWGYSDSDYFNAIKNANTPTWDSIWQEFPKTLINASSLEVGLPRSQMGNSEVGHVNIGCGRVVYQELTKIDKAIEEKTFGDNKAICAAIDNVIKNDSNLHLIGLLSPGGVHSHEEHIFEMIKIAKQKGIKRLYLHAFLDGRDTPPRSAEKSIKKADKLLQDLNLGYIASVCGRYYAMDRDNRWDRVEKAYNAIVNANADFIYDSALEALEQSYARDQSDEFVIPTCIKKDGHLVKVQDNDSVIFMNFRADRAREISHAFTDESFDHFPRKKHLNINFTTLTEYDSKLKCAVAFPPKQPINTLGEVLMKNHKTQLRIAETEKYPHVTFFFNGGREEQFEGEDRILIPSPKVATYDLQPEMSAPEVTDKLVAAINSGKYDCIVCNYANSDMVGHTGNYEAAMQAIEYLDKCIARLKDAILEHDGNMFITADHGNADMMVNPETQKPHTAHTTNLVPFIYVGHKKAQVALEHGKLSDIAPTLLNVMGIAQPKEMTGKTIFNFEK.

2 residues coordinate Mn(2+): Asp11 and Ser61. Ser61 functions as the Phosphoserine intermediate in the catalytic mechanism. Residues His122, 152-153 (RD), Arg184, Arg190, 259-262 (RADR), and Lys332 contribute to the substrate site. Mn(2+) is bound by residues Asp399, His403, Asp440, His441, and His459.

Belongs to the BPG-independent phosphoglycerate mutase family. As to quaternary structure, monomer. Mn(2+) serves as cofactor.

It carries out the reaction (2R)-2-phosphoglycerate = (2R)-3-phosphoglycerate. It functions in the pathway carbohydrate degradation; glycolysis; pyruvate from D-glyceraldehyde 3-phosphate: step 3/5. In terms of biological role, catalyzes the interconversion of 2-phosphoglycerate and 3-phosphoglycerate. The chain is 2,3-bisphosphoglycerate-independent phosphoglycerate mutase from Francisella tularensis subsp. tularensis (strain WY96-3418).